Here is a 163-residue protein sequence, read N- to C-terminus: Ribosome maturation factor RimM (163 aa).

One can recognise a PRC barrel domain in the interval 94–162 (ADEYYYIDLI…DHLVIAADFI (69 aa)).

This sequence belongs to the RimM family. In terms of assembly, binds ribosomal protein uS19.

The protein resides in the cytoplasm. Functionally, an accessory protein needed during the final step in the assembly of 30S ribosomal subunit, possibly for assembly of the head region. Essential for efficient processing of 16S rRNA. May be needed both before and after RbfA during the maturation of 16S rRNA. It has affinity for free ribosomal 30S subunits but not for 70S ribosomes. The polypeptide is Ribosome maturation factor RimM (Zymomonas mobilis subsp. mobilis (strain ATCC 31821 / ZM4 / CP4)).